Here is a 219-residue protein sequence, read N- to C-terminus: Adenylate kinase (219 aa).

ATP is bound at residue 10 to 15 (GAGKGT). An NMP region spans residues 30–59 (STGDMLRAAVKAETPVGLEAKKVMDAGQLV). AMP is bound by residues threonine 31, arginine 36, 57–59 (QLV), 85–88 (GFPR), and glutamine 92. The segment at 122–159 (GRRVHLSSGRTYHVLFNPPKQEGLDDETGEPLVQRADD) is LID. Residues arginine 123 and 132-133 (TY) each bind ATP. AMP contacts are provided by arginine 156 and arginine 167. Glycine 203 provides a ligand contact to ATP.

Belongs to the adenylate kinase family. As to quaternary structure, monomer.

It is found in the cytoplasm. It carries out the reaction AMP + ATP = 2 ADP. It functions in the pathway purine metabolism; AMP biosynthesis via salvage pathway; AMP from ADP: step 1/1. Functionally, catalyzes the reversible transfer of the terminal phosphate group between ATP and AMP. Plays an important role in cellular energy homeostasis and in adenine nucleotide metabolism. In Chlorobium limicola (strain DSM 245 / NBRC 103803 / 6330), this protein is Adenylate kinase.